We begin with the raw amino-acid sequence, 495 residues long: Aspartyl/glutamyl-tRNA(Asn/Gln) amidotransferase subunit B (495 aa).

Belongs to the GatB/GatE family. GatB subfamily. Heterotrimer of A, B and C subunits.

It carries out the reaction L-glutamyl-tRNA(Gln) + L-glutamine + ATP + H2O = L-glutaminyl-tRNA(Gln) + L-glutamate + ADP + phosphate + H(+). The catalysed reaction is L-aspartyl-tRNA(Asn) + L-glutamine + ATP + H2O = L-asparaginyl-tRNA(Asn) + L-glutamate + ADP + phosphate + 2 H(+). In terms of biological role, allows the formation of correctly charged Asn-tRNA(Asn) or Gln-tRNA(Gln) through the transamidation of misacylated Asp-tRNA(Asn) or Glu-tRNA(Gln) in organisms which lack either or both of asparaginyl-tRNA or glutaminyl-tRNA synthetases. The reaction takes place in the presence of glutamine and ATP through an activated phospho-Asp-tRNA(Asn) or phospho-Glu-tRNA(Gln). The sequence is that of Aspartyl/glutamyl-tRNA(Asn/Gln) amidotransferase subunit B from Halobacterium salinarum (strain ATCC 700922 / JCM 11081 / NRC-1) (Halobacterium halobium).